The sequence spans 163 residues: Retinoic acid receptor responder protein 2 (163 aa).

Positions 1-20 (MKYLLISLALWLGMVGIHGT) are cleaved as a signal peptide. Disulfide bonds link cysteine 79/cysteine 89, cysteine 100/cysteine 119, and cysteine 103/cysteine 135. Residues 158-163 (RALKHK) constitute a propeptide that is removed on maturation.

In terms of processing, secreted in an inactive precursor form, prochemerin, which is proteolytically processed by a variety of extracellular proteases to generate forms with differing levels of bioactivity. For example, the removal of six amino acids results in chemerin-157, which exhibits the highest activity, while removal of seven amino acids results in chemerin-156 which has slightly less activity. Some proteases are able to cleave at more than one site and chemerin forms may be sequentially processed by different enzymes to modulate activity levels. The coordinated expression and activity of chemerin-modifying enzymes is essential for regulating its bioactivation, inactivation and, consequently, biological function. Cathepsin G cleaves seven C-terminal amino acids from prochemerin (chemerin-156), elastase is able to cleave six (chemerin-157), eight (chemerin-155) or eleven (chemerin-152), plasmin cleaves five amino acids (chemerin-158), and tryptase cleaves five (chemerin-158) or eight (chemerin-155). Multiple cleavages might be required to fully activate chemerin, with an initial tryptase cleavage resulting in chemerin with low activity (chemerin-158), and a second cleavage by carboxypeptidase N or B producing highly active chemerin (chemerin-157).

It is found in the secreted. Its function is as follows. Adipocyte-secreted protein (adipokine) that regulates adipogenesis, metabolism and inflammation through activation of the chemokine-like receptor 1 (CMKLR1). Also acts as a ligand for CMKLR2. Can also bind to C-C chemokine receptor-like 2 (CCRL2), but with a lower affinity than it does to CMKLR1 or CMKLR2. Positively regulates adipocyte differentiation, modulates the expression of adipocyte genes involved in lipid and glucose metabolism and might play a role in angiogenesis, a process essential for the expansion of white adipose tissue. Also acts as a pro-inflammatory adipokine, causing an increase in secretion of pro-inflammatory and prodiabetic adipokines, which further impair adipose tissue metabolic function and have negative systemic effects including impaired insulin sensitivity, altered glucose and lipid metabolism, and a decrease in vascular function in other tissues. Can have both pro- and anti-inflammatory properties depending on the modality of enzymatic cleavage by different classes of proteases. Acts as a chemotactic factor for leukocyte populations expressing CMKLR1, particularly immature plasmacytoid dendritic cells, but also immature myeloid DCs, macrophages and natural killer cells. Exerts an anti-inflammatory role by preventing TNF/TNFA-induced VCAM1 expression and monocytes adhesion in vascular endothelial cells. The effect is mediated via inhibiting activation of NF-kappa-B and CRK/p38 through stimulation of AKT1/NOS3 signaling and nitric oxide production. Its dual role in inflammation and metabolism might provide a link Exhibits an antimicrobial function in the skin. This chain is Retinoic acid receptor responder protein 2 (RARRES2), found in Cricetulus griseus (Chinese hamster).